A 723-amino-acid polypeptide reads, in one-letter code: BBSome complex assembly protein BBS10 (723 aa).

Belongs to the TCP-1 chaperonin family. As to quaternary structure, component of a complex composed at least of MKKS, BBS10, BBS12, TCP1, CCT2, CCT3, CCT4, CCT5 and CCT8.

It is found in the cell projection. It localises to the cilium. Functionally, probable molecular chaperone that assists the folding of proteins upon ATP hydrolysis. Plays a role in the assembly of BBSome, a complex involved in ciliogenesis regulating transports vesicles to the cilia. Involved in adipogenic differentiation. The polypeptide is BBSome complex assembly protein BBS10 (BBS10) (Homo sapiens (Human)).